The primary structure comprises 248 residues: 2,3-bisphosphoglycerate-dependent phosphoglycerate mutase (248 aa).

Substrate contacts are provided by residues 8–15 (RHGESTWN), 21–22 (TG), Arg60, 87–90 (ERHY), Lys98, 114–115 (RR), and 183–184 (GN). His9 acts as the Tele-phosphohistidine intermediate in catalysis. Glu87 acts as the Proton donor/acceptor in catalysis.

Belongs to the phosphoglycerate mutase family. BPG-dependent PGAM subfamily. As to quaternary structure, homodimer.

It carries out the reaction (2R)-2-phosphoglycerate = (2R)-3-phosphoglycerate. It participates in carbohydrate degradation; glycolysis; pyruvate from D-glyceraldehyde 3-phosphate: step 3/5. Functionally, catalyzes the interconversion of 2-phosphoglycerate and 3-phosphoglycerate. This Cupriavidus pinatubonensis (strain JMP 134 / LMG 1197) (Cupriavidus necator (strain JMP 134)) protein is 2,3-bisphosphoglycerate-dependent phosphoglycerate mutase.